Reading from the N-terminus, the 88-residue chain is Small ribosomal subunit protein bS20 (88 aa).

It belongs to the bacterial ribosomal protein bS20 family.

Binds directly to 16S ribosomal RNA. This Natranaerobius thermophilus (strain ATCC BAA-1301 / DSM 18059 / JW/NM-WN-LF) protein is Small ribosomal subunit protein bS20.